The sequence spans 277 residues: MKCSICVHTSKTKKIINYEGKPICVDCLTMLKYPPNFEKMKKEVEEILYNLKKEGGKYHCILAFSGGKDSVLALKLLKEKFKLNPLCVMVDNKYMAKEAIENALNVTKHYQVDLMILNRDYTDLFEDAIKRGESPCRRCSRLILREVWRVTKLLGLKYIITGHELPFGHSAIREMKEGIKMIRLLAPYKFKEEEKYKMLEDLPWKKPDLGGYTTNCLVLGVALERFYDKYGFSFEIDRIATLVRLGLLSKEKAKKELEKPKVPKEIYEELRRRGLKI.

This is an uncharacterized protein from Methanocaldococcus jannaschii (strain ATCC 43067 / DSM 2661 / JAL-1 / JCM 10045 / NBRC 100440) (Methanococcus jannaschii).